We begin with the raw amino-acid sequence, 66 residues long: Large ribosomal subunit protein bL31 (66 aa).

Zn(2+)-binding residues include cysteine 16, cysteine 18, cysteine 36, and cysteine 39.

This sequence belongs to the bacterial ribosomal protein bL31 family. Type A subfamily. Part of the 50S ribosomal subunit. Zn(2+) serves as cofactor.

In terms of biological role, binds the 23S rRNA. The protein is Large ribosomal subunit protein bL31 of Priestia megaterium (Bacillus megaterium).